The sequence spans 870 residues: Histidine biosynthesis trifunctional protein (870 aa).

Residues 1 to 285 form a phosphoribosyl-AMP cyclohydrolase region; it reads METTLPLPFL…KFVVKQKGRF (285 aa). Residues 286 to 367 form a phosphoribosyl-ATP pyrophosphohydrolase region; it reads CHLDQSGCFG…FYFALTRAVA (82 aa). The tract at residues 368-870 is histidinol dehydrogenase; it reads AGVTLADIER…IRLEHMSKSN (503 aa). Zn(2+)-binding residues include glutamine 693 and histidine 696. Residues glutamate 762 and histidine 763 contribute to the active site. Positions 796 and 855 each coordinate Zn(2+).

This sequence in the C-terminal section; belongs to the histidinol dehydrogenase family. It depends on Zn(2+) as a cofactor.

It carries out the reaction 1-(5-phospho-beta-D-ribosyl)-5'-AMP + H2O = 1-(5-phospho-beta-D-ribosyl)-5-[(5-phospho-beta-D-ribosylamino)methylideneamino]imidazole-4-carboxamide. The catalysed reaction is 1-(5-phospho-beta-D-ribosyl)-ATP + H2O = 1-(5-phospho-beta-D-ribosyl)-5'-AMP + diphosphate + H(+). The enzyme catalyses L-histidinol + 2 NAD(+) + H2O = L-histidine + 2 NADH + 3 H(+). The protein operates within amino-acid biosynthesis; L-histidine biosynthesis; L-histidine from 5-phospho-alpha-D-ribose 1-diphosphate: step 2/9. Its pathway is amino-acid biosynthesis; L-histidine biosynthesis; L-histidine from 5-phospho-alpha-D-ribose 1-diphosphate: step 3/9. It functions in the pathway amino-acid biosynthesis; L-histidine biosynthesis; L-histidine from 5-phospho-alpha-D-ribose 1-diphosphate: step 9/9. The protein is Histidine biosynthesis trifunctional protein (his-3) of Neurospora crassa (strain ATCC 24698 / 74-OR23-1A / CBS 708.71 / DSM 1257 / FGSC 987).